The following is a 314-amino-acid chain: 2,3,4,5-tetrahydropyridine-2,6-dicarboxylate N-succinyltransferase (314 aa).

Residues Asp-163 and Glu-180 each coordinate Mg(2+). Catalysis depends on Glu-196, which acts as the Acyl-anhydride intermediate. Succinyl-CoA-binding positions include Arg-198, Gly-213, Ser-216, Ala-239, 254-255 (EA), Gly-262, Lys-274, and 287-290 (RRNS).

It belongs to the type 2 tetrahydrodipicolinate N-succinyltransferase family. In terms of assembly, homotrimer.

Its subcellular location is the cytoplasm. The catalysed reaction is (S)-2,3,4,5-tetrahydrodipicolinate + succinyl-CoA + H2O = (S)-2-succinylamino-6-oxoheptanedioate + CoA. It functions in the pathway amino-acid biosynthesis; L-lysine biosynthesis via DAP pathway; LL-2,6-diaminopimelate from (S)-tetrahydrodipicolinate (succinylase route): step 1/3. Functionally, catalyzes the conversion of the cyclic tetrahydrodipicolinate (THDP) into the acyclic N-succinyl-L-2-amino-6-oxopimelate using succinyl-CoA. The chain is 2,3,4,5-tetrahydropyridine-2,6-dicarboxylate N-succinyltransferase from Mycolicibacterium smegmatis (strain ATCC 700084 / mc(2)155) (Mycobacterium smegmatis).